The sequence spans 141 residues: Alpha-lactalbumin (141 aa).

The first 19 residues, 1–19 (MMSFVSLLVVGILFPAIQA), serve as a signal peptide directing secretion. Positions 20 to 141 (KQFTKCELSQ…KLDQWLCEKM (122 aa)) constitute a C-type lysozyme domain. Intrachain disulfides connect cysteine 25–cysteine 138, cysteine 47–cysteine 129, cysteine 80–cysteine 95, and cysteine 91–cysteine 109. Positions 97, 100, 102, 105, and 106 each coordinate Ca(2+).

The protein belongs to the glycosyl hydrolase 22 family. As to quaternary structure, lactose synthase (LS) is a heterodimer of a catalytic component, beta1,4-galactosyltransferase (beta4Gal-T1) and a regulatory component, alpha-lactalbumin (LA). As to expression, mammary gland specific. Secreted in milk.

The protein resides in the secreted. Its function is as follows. Regulatory subunit of lactose synthase, changes the substrate specificity of galactosyltransferase in the mammary gland making glucose a good acceptor substrate for this enzyme. This enables LS to synthesize lactose, the major carbohydrate component of milk. In other tissues, galactosyltransferase transfers galactose onto the N-acetylglucosamine of the oligosaccharide chains in glycoproteins. The polypeptide is Alpha-lactalbumin (LALBA) (Sus scrofa (Pig)).